Here is a 143-residue protein sequence, read N- to C-terminus: Ayaconin (143 aa).

A signal peptide spans M1 to A22.

Interacts with human F12 (inactive). Salivary gland.

The protein resides in the secreted. Inhibits the intrinsic blood coagulation pathway in the host by blocking activation of host coagulation factor XII (F12). This is Ayaconin from Lutzomyia ayacuchensis (Sand fly).